Consider the following 732-residue polypeptide: Ribosomal RNA large subunit methyltransferase K/L (732 aa).

Residues 50–162 (MAYRICLWSR…RGRLLLGLDL (113 aa)) enclose the THUMP domain. Residues 396–424 (TERETSSEGDEPQGASGATSRPGPRNDGA) are disordered.

The protein belongs to the methyltransferase superfamily. RlmKL family.

The protein resides in the cytoplasm. It carries out the reaction guanosine(2445) in 23S rRNA + S-adenosyl-L-methionine = N(2)-methylguanosine(2445) in 23S rRNA + S-adenosyl-L-homocysteine + H(+). It catalyses the reaction guanosine(2069) in 23S rRNA + S-adenosyl-L-methionine = N(2)-methylguanosine(2069) in 23S rRNA + S-adenosyl-L-homocysteine + H(+). Its function is as follows. Specifically methylates the guanine in position 2445 (m2G2445) and the guanine in position 2069 (m7G2069) of 23S rRNA. The polypeptide is Ribosomal RNA large subunit methyltransferase K/L (Chromohalobacter salexigens (strain ATCC BAA-138 / DSM 3043 / CIP 106854 / NCIMB 13768 / 1H11)).